The primary structure comprises 281 residues: Cell growth regulator with EF hand domain protein 1 (281 aa).

Positions Met-1–Ala-21 are cleaved as a signal peptide. 2 consecutive EF-hand domains span residues Asn-71–Pro-106 and Pro-115–Arg-150. Residues Asp-84, Asp-86, Asn-88, Gln-90, Glu-95, Asp-128, Asp-130, Asp-132, and Glu-139 each coordinate Ca(2+). The disordered stretch occupies residues Glu-146–Ile-281. The segment covering Leu-169–Gly-184 has biased composition (polar residues). The segment covering Thr-185–Val-213 has biased composition (basic and acidic residues). A phosphoserine mark is found at Ser-217 and Ser-228. Residues Gly-234–Pro-256 show a composition bias toward basic and acidic residues.

Probably digested extracellularly by an unknown serine protease generating extremely hydrophobic bioactive peptides. In terms of tissue distribution, expressed predominantly in whole brain and kidney, with limited expression in heart, lung, liver, and skeletal muscle and no expression in spleen and testis. Also expressed in pituitary gland, adrenal gland, digestive tract, and reproductive organs.

It is found in the secreted. Its function is as follows. Mediates cell-cell adhesion in a calcium-dependent manner. Able to inhibit growth in several cell lines. The protein is Cell growth regulator with EF hand domain protein 1 of Rattus norvegicus (Rat).